The chain runs to 388 residues: tRNA-specific 2-thiouridylase MnmA (388 aa).

ATP-binding positions include Gly26–Ser33 and Leu52. Cys113 functions as the Nucleophile in the catalytic mechanism. Cysteines 113 and 223 form a disulfide. Gly138 provides a ligand contact to ATP. The interval Lys173 to Gln175 is interaction with tRNA. Cys223 serves as the catalytic Cysteine persulfide intermediate. Residues Arg328–Tyr329 are interaction with tRNA.

Belongs to the MnmA/TRMU family.

The protein localises to the cytoplasm. The enzyme catalyses S-sulfanyl-L-cysteinyl-[protein] + uridine(34) in tRNA + AH2 + ATP = 2-thiouridine(34) in tRNA + L-cysteinyl-[protein] + A + AMP + diphosphate + H(+). In terms of biological role, catalyzes the 2-thiolation of uridine at the wobble position (U34) of tRNA, leading to the formation of s(2)U34. The protein is tRNA-specific 2-thiouridylase MnmA of Prochlorococcus marinus (strain NATL2A).